Consider the following 1040-residue polypeptide: Chromatin modification-related protein rik1 (1040 aa).

Belongs to the DDB1 family. As to quaternary structure, component of the Clr4 methyltransferase complex (ClrC) composed of at least clr4, rik1, pcu4, rbx1, raf1 and raf2. The cullin pcu4, rik1, raf1, raf2 and the ring-box protein rbx1 are components of an E3 ubiquitin ligase, whose activity is essential for heterochromatin assembly.

The protein resides in the nucleus. It is found in the cytoplasm. It localises to the cytoskeleton. Its subcellular location is the microtubule organizing center. The protein localises to the spindle pole body. The protein resides in the chromosome. Its function is as follows. Component of the Clr4 methyltransferase complex (ClrC) which contributes to the establishment of heterochromatin by specifically methylating histone H3 to form H3K9me. ClrC preferentially ubiquitylates H3K14 and ClrC-mediated H3 ubiquitination promotes clr4 methyltransferase activity for the methylation of H3K9. H3K9me represents a specific tag for epigenetic transcriptional repression by recruiting swi6/HP1 to methylated histones which leads to transcriptional silencing within centromeric heterochromatin, telomeric regions and at the silent mating-type loci. Rik1 is involved in the RNAi-mediated targeting of ClrC to heterochromatic repeat elements. Rik1 also has a function in meiotic telomere clustering. The protein is Chromatin modification-related protein rik1 (rik1) of Schizosaccharomyces pombe (strain 972 / ATCC 24843) (Fission yeast).